A 508-amino-acid chain; its full sequence is Steroid 17-alpha-hydroxylase/17,20 lyase (508 aa).

Position 202 (Asn202) interacts with substrate. Cys442 provides a ligand contact to heme.

The protein belongs to the cytochrome P450 family. Heme is required as a cofactor.

The protein resides in the endoplasmic reticulum membrane. The protein localises to the microsome membrane. The catalysed reaction is a C21-steroid + reduced [NADPH--hemoprotein reductase] + O2 = a 17alpha-hydroxy-C21-steroid + oxidized [NADPH--hemoprotein reductase] + H2O + H(+). It catalyses the reaction progesterone + reduced [NADPH--hemoprotein reductase] + O2 = 17alpha-hydroxyprogesterone + oxidized [NADPH--hemoprotein reductase] + H2O + H(+). It carries out the reaction pregnenolone + reduced [NADPH--hemoprotein reductase] + O2 = 17alpha-hydroxypregnenolone + oxidized [NADPH--hemoprotein reductase] + H2O + H(+). The enzyme catalyses 17alpha-hydroxyprogesterone + reduced [NADPH--hemoprotein reductase] + O2 = androst-4-ene-3,17-dione + acetate + oxidized [NADPH--hemoprotein reductase] + H2O + 2 H(+). The catalysed reaction is 17alpha-hydroxyprogesterone + reduced [NADPH--hemoprotein reductase] + O2 = 16alpha,17alpha-dihydroxyprogesterone + oxidized [NADPH--hemoprotein reductase] + H2O + H(+). It catalyses the reaction 16alpha,17alpha-dihydroxyprogesterone + reduced [NADPH--hemoprotein reductase] + O2 = 6beta,16alpha,17alpha-trihydroxyprogesterone + oxidized [NADPH--hemoprotein reductase] + H2O + H(+). It carries out the reaction 17alpha-hydroxypregnenolone + reduced [NADPH--hemoprotein reductase] + O2 = 3beta-hydroxyandrost-5-en-17-one + acetate + oxidized [NADPH--hemoprotein reductase] + H2O + 2 H(+). The enzyme catalyses 16alpha,17alpha-dihydroxypregnenolone + reduced [NADPH--hemoprotein reductase] + O2 = 3beta,16alpha-dihydroxy-androst-5-en-17-one + acetate + oxidized [NADPH--hemoprotein reductase] + H2O + 2 H(+). The catalysed reaction is 3beta-hydroxyandrost-5-en-17-one + reduced [NADPH--hemoprotein reductase] + O2 = 3beta,16alpha-dihydroxy-androst-5-en-17-one + oxidized [NADPH--hemoprotein reductase] + H2O + H(+). It catalyses the reaction androst-4-ene-3,17-dione + reduced [NADPH--hemoprotein reductase] + O2 = 16alpha-hydroxyandrost-4-ene-3,17-dione + oxidized [NADPH--hemoprotein reductase] + H2O + H(+). Its pathway is steroid hormone biosynthesis. It functions in the pathway steroid biosynthesis; glucocorticoid biosynthesis. Regulated predominantly by intracellular cAMP levels. The 17,20-lyase activity is stimulated by cytochrome b5, which acts as an allosteric effector increasing the Vmax of the lyase activity. A cytochrome P450 monooxygenase involved in corticoid and androgen biosynthesis. Catalyzes 17-alpha hydroxylation of C21 steroids, which is common for both pathways. A second oxidative step, required only for androgen synthesis, involves an acyl-carbon cleavage. The 17-alpha hydroxy intermediates, as part of adrenal glucocorticoids biosynthesis pathway, are precursors of cortisol. Hydroxylates steroid hormones, pregnenolone and progesterone to form 17-alpha hydroxy metabolites, followed by the cleavage of the C17-C20 bond to form C19 steroids, dehydroepiandrosterone (DHEA) and androstenedione. Has 16-alpha hydroxylase activity. Catalyzes 16-alpha hydroxylation of 17-alpha hydroxy pregnenolone, followed by the cleavage of the C17-C20 bond to form 16-alpha-hydroxy DHEA. Also 16-alpha hydroxylates androgens, relevant for estriol synthesis. Mechanistically, uses molecular oxygen inserting one oxygen atom into a substrate, and reducing the second into a water molecule, with two electrons provided by NADPH via cytochrome P450 reductase (CPR; NADPH-ferrihemoprotein reductase). The protein is Steroid 17-alpha-hydroxylase/17,20 lyase (CYP17A1) of Pan troglodytes (Chimpanzee).